We begin with the raw amino-acid sequence, 314 residues long: Thioredoxin reductase aclD (314 aa).

Residues 13 to 16 (GGPA), 35 to 40 (DSKSYR), histidine 47, and alanine 112 contribute to the FAD site. An intrachain disulfide couples cysteine 136 to cysteine 139. FAD-binding positions include aspartate 281 and 288-289 (AA).

Belongs to the class-II pyridine nucleotide-disulfide oxidoreductase family. In terms of assembly, homodimer. The cofactor is FAD.

It functions in the pathway mycotoxin biosynthesis. In terms of biological role, thioredoxin reductase; part of the gene cluster that mediates the biosynthesis of aspirochlorine (or antibiotic A30641), an unusual halogenated spiro compound with distinctive antifungal properties due to selective inhibition of protein biosynthesis, and which is also active against bacteria, viruses, and murine tumor cells. The non-ribosomal peptide synthetase (NRPS) aclP is responsible the formation of the diketopiperazine (DKP) core from the condensation of 2 phenylalanine residues. One Phe residue is tailored into chlorotyrosine by hydroxylation and chlorination, whereas the second Phe undergoes an unprecedented C-C bond cleavage to be converted into glycine. After formation of the DKP, sulfur is incorporated into the DKP by conjugation with glutathione by aclG, followed by its stepwise degradation to the thiol by aclI, aclJ and aclK, and the dithiol oxidation by aclT. In addition, oxygenases (aclB, aclC, aclL and aclO) and O-methyltransferases (aclM and aclU) act as tailoring enzymes to produce the intermediate dechloroaspirochlorine. Ultimately, chlorination of dechloroaspirochlorine by the halogenase aclH is the last step in the aspirochlorine pathway. The protein is Thioredoxin reductase aclD of Aspergillus oryzae (strain ATCC 42149 / RIB 40) (Yellow koji mold).